The sequence spans 448 residues: MILTSNVKLMPGSKVEAVIQISKEFVKAKYNEILKDYSSRLKVKGFRTGRVPFSIIEGKYSDNIRALAIENLIHKSLEEFFESAIYKPLSYAVPKILDEKLEINFDKDFEFTFVYESYPEFEISDISNFKVEIPEVVISDSDIEDELKLLQFENSIIVEDNGSVKVGSIVRVDFVELDDSLNEILATKRQDFVLTVGESDDYYGFGYDIIGMKKDEEKIVEKNYGSDYKFSELANTSKRLKIGVKDIKRRDIPELDDAFAKDVKDSLNTLEDLRDYVRENMLKVVQEKTNSLKLSKLLSGIAEKVNIDVPSSMFEAELKNVINEFSHQNKINITQLQNSSTGLEGVNDVFKENVLNKLKSKLVFQKMVDNDSSEVTELDLENELIKQAQNLKMAPQDVKKFYKERNLFGLLKDEIKRQKVKEKILQDLEEIKLEKVSFRDFVNYKTGE.

Residues 167-253 enclose the PPIase FKBP-type domain; the sequence is GSIVRVDFVE…VKDIKRRDIP (87 aa).

Belongs to the FKBP-type PPIase family. Tig subfamily.

Its subcellular location is the cytoplasm. The catalysed reaction is [protein]-peptidylproline (omega=180) = [protein]-peptidylproline (omega=0). Functionally, involved in protein export. Acts as a chaperone by maintaining the newly synthesized protein in an open conformation. Functions as a peptidyl-prolyl cis-trans isomerase. This Borrelia duttonii (strain Ly) protein is Trigger factor.